The sequence spans 229 residues: Ribonuclease 3 (229 aa).

The region spanning 5-127 (LSRLERQLGY…LIGAIYLDAG (123 aa)) is the RNase III domain. Glu40 is a Mg(2+) binding site. Residue Asp44 is part of the active site. Positions 113 and 116 each coordinate Mg(2+). Glu116 is a catalytic residue. The DRBM domain maps to 154–224 (DPKTRLQEFL…AAAALIALGV (71 aa)).

The protein belongs to the ribonuclease III family. As to quaternary structure, homodimer. It depends on Mg(2+) as a cofactor.

Its subcellular location is the cytoplasm. The catalysed reaction is Endonucleolytic cleavage to 5'-phosphomonoester.. In terms of biological role, digests double-stranded RNA. Involved in the processing of primary rRNA transcript to yield the immediate precursors to the large and small rRNAs (23S and 16S). Processes some mRNAs, and tRNAs when they are encoded in the rRNA operon. Processes pre-crRNA and tracrRNA of type II CRISPR loci if present in the organism. The protein is Ribonuclease 3 of Pseudomonas fluorescens (strain Pf0-1).